The following is a 371-amino-acid chain: DNA replication and repair protein RecF (371 aa).

30–37 contacts ATP; the sequence is GKNGQGKT.

Belongs to the RecF family.

The protein localises to the cytoplasm. Its function is as follows. The RecF protein is involved in DNA metabolism; it is required for DNA replication and normal SOS inducibility. RecF binds preferentially to single-stranded, linear DNA. It also seems to bind ATP. This Clostridioides difficile (strain 630) (Peptoclostridium difficile) protein is DNA replication and repair protein RecF.